The following is a 614-amino-acid chain: Putative binding protein BMEII0691 (614 aa).

The first 28 residues, 1–28 (MNRFIAFFRSVFLIGLVATAFGALPARA), serve as a signal peptide directing secretion.

Belongs to the bacterial solute-binding protein 5 family.

It is found in the periplasm. In Brucella melitensis biotype 1 (strain ATCC 23456 / CCUG 17765 / NCTC 10094 / 16M), this protein is Putative binding protein BMEII0691.